The sequence spans 143 residues: Large ribosomal subunit protein uL11 (143 aa).

Belongs to the universal ribosomal protein uL11 family. As to quaternary structure, part of the ribosomal stalk of the 50S ribosomal subunit. Interacts with L10 and the large rRNA to form the base of the stalk. L10 forms an elongated spine to which L12 dimers bind in a sequential fashion forming a multimeric L10(L12)X complex. In terms of processing, one or more lysine residues are methylated.

Functionally, forms part of the ribosomal stalk which helps the ribosome interact with GTP-bound translation factors. This Saccharophagus degradans (strain 2-40 / ATCC 43961 / DSM 17024) protein is Large ribosomal subunit protein uL11.